Reading from the N-terminus, the 971-residue chain is Zinc finger CCCH domain-containing protein 7A (971 aa).

3 TPR repeats span residues 43 to 76 (VRNL…ADYA), 89 to 122 (EKLY…NASN), and 124 to 156 (KALY…VPQD). Phosphothreonine is present on Thr-210. 2 consecutive C3H1-type zinc fingers follow at residues 634-656 (LCRH…HSLV) and 769-797 (PLQF…HSPE). Residues 857–881 (FHCWMCGKNCNSEKQWQGHISSEKH) form a C2H2-type zinc finger. A C3H1-type 3 zinc finger spans residues 906–928 (ICDRYMNGTCPEGNSCKFAHGNA). The stretch at 924-952 (AHGNAELHEWEERRDALKMKLNKARKDHL) forms a coiled coil.

The protein localises to the nucleus. May be a specific regulator of miRNA biogenesis. Binds to microRNAs MIR7-1, MIR16-2 and MIR29A hairpins recognizing the 3'-ATA(A/T)-5' motif in the apical loop. This is Zinc finger CCCH domain-containing protein 7A (ZC3H7A) from Homo sapiens (Human).